The following is a 332-amino-acid chain: Glycerol-3-phosphate dehydrogenase [NAD(P)+] (332 aa).

Serine 15, tryptophan 16, and lysine 110 together coordinate NADPH. Sn-glycerol 3-phosphate-binding residues include lysine 110, glycine 137, and serine 139. Alanine 141 contacts NADPH. Sn-glycerol 3-phosphate-binding residues include lysine 192, aspartate 245, serine 255, arginine 256, and asparagine 257. Lysine 192 serves as the catalytic Proton acceptor. Arginine 256 is a binding site for NADPH. Glutamate 282 contacts NADPH.

This sequence belongs to the NAD-dependent glycerol-3-phosphate dehydrogenase family.

It localises to the cytoplasm. The enzyme catalyses sn-glycerol 3-phosphate + NAD(+) = dihydroxyacetone phosphate + NADH + H(+). It catalyses the reaction sn-glycerol 3-phosphate + NADP(+) = dihydroxyacetone phosphate + NADPH + H(+). The protein operates within membrane lipid metabolism; glycerophospholipid metabolism. In terms of biological role, catalyzes the reduction of the glycolytic intermediate dihydroxyacetone phosphate (DHAP) to sn-glycerol 3-phosphate (G3P), the key precursor for phospholipid synthesis. This Coxiella burnetii (strain CbuK_Q154) (Coxiella burnetii (strain Q154)) protein is Glycerol-3-phosphate dehydrogenase [NAD(P)+].